The chain runs to 185 residues: Ribosome-recycling factor (185 aa).

This sequence belongs to the RRF family.

It localises to the cytoplasm. Responsible for the release of ribosomes from messenger RNA at the termination of protein biosynthesis. May increase the efficiency of translation by recycling ribosomes from one round of translation to another. The protein is Ribosome-recycling factor of Bacillus cereus (strain B4264).